The sequence spans 37 residues: Large ribosomal subunit protein bL36c (37 aa).

The protein belongs to the bacterial ribosomal protein bL36 family.

Its subcellular location is the plastid. It is found in the chloroplast. This is Large ribosomal subunit protein bL36c from Ostreococcus tauri.